The primary structure comprises 397 residues: Argininosuccinate synthase (397 aa).

Residue 8–16 (AYSGGLDTS) participates in ATP binding. Residues tyrosine 86 and serine 91 each coordinate L-citrulline. Glycine 116 lines the ATP pocket. L-aspartate-binding residues include threonine 118, asparagine 122, and aspartate 123. Asparagine 122 is a binding site for L-citrulline. L-citrulline contacts are provided by arginine 126, serine 175, serine 184, glutamate 260, and tyrosine 272.

It belongs to the argininosuccinate synthase family. Type 1 subfamily. As to quaternary structure, homotetramer.

It is found in the cytoplasm. The catalysed reaction is L-citrulline + L-aspartate + ATP = 2-(N(omega)-L-arginino)succinate + AMP + diphosphate + H(+). It functions in the pathway amino-acid biosynthesis; L-arginine biosynthesis; L-arginine from L-ornithine and carbamoyl phosphate: step 2/3. The sequence is that of Argininosuccinate synthase from Clostridium botulinum (strain Okra / Type B1).